The chain runs to 188 residues: Trafficking protein particle complex subunit 5 (188 aa).

At serine 10 the chain carries Phosphoserine.

Belongs to the TRAPP small subunits family. BET3 subfamily. In terms of assembly, component of the multisubunit TRAPP (transport protein particle) complex, which includes at least TRAPPC2, TRAPPC2L, TRAPPC3, TRAPPC3L, TRAPPC4, TRAPPC5, TRAPPC8, TRAPPC9, TRAPPC10, TRAPPC11 and TRAPPC12.

The protein resides in the golgi apparatus. It is found in the cis-Golgi network. The protein localises to the endoplasmic reticulum. Functionally, may play a role in vesicular transport from endoplasmic reticulum to Golgi. The polypeptide is Trafficking protein particle complex subunit 5 (TRAPPC5) (Homo sapiens (Human)).